Here is a 332-residue protein sequence, read N- to C-terminus: Thiamine thiazole synthase (332 aa).

Substrate-binding positions include cysteine 87, 108–109 (EA), glycine 116, and valine 184. Cysteine 221 is modified (2,3-didehydroalanine (Cys)). Substrate is bound by residues aspartate 223, histidine 238, methionine 290, and 300 to 302 (RMG).

This sequence belongs to the THI4 family. In terms of assembly, homooctamer. Requires Fe cation as cofactor. During the catalytic reaction, a sulfide is transferred from Cys-221 to a reaction intermediate, generating a dehydroalanine residue.

Its subcellular location is the cytoplasm. It localises to the nucleus. The catalysed reaction is [ADP-thiazole synthase]-L-cysteine + glycine + NAD(+) = [ADP-thiazole synthase]-dehydroalanine + ADP-5-ethyl-4-methylthiazole-2-carboxylate + nicotinamide + 3 H2O + 2 H(+). Functionally, involved in biosynthesis of the thiamine precursor thiazole. Catalyzes the conversion of NAD and glycine to adenosine diphosphate 5-(2-hydroxyethyl)-4-methylthiazole-2-carboxylic acid (ADT), an adenylated thiazole intermediate. The reaction includes an iron-dependent sulfide transfer from a conserved cysteine residue of the protein to a thiazole intermediate. The enzyme can only undergo a single turnover, which suggests it is a suicide enzyme. May have additional roles in adaptation to various stress conditions and in DNA damage tolerance. In Aspergillus fumigatus (strain ATCC MYA-4609 / CBS 101355 / FGSC A1100 / Af293) (Neosartorya fumigata), this protein is Thiamine thiazole synthase.